The chain runs to 127 residues: Fumarate reductase subunit C (127 aa).

The next 3 helical transmembrane spans lie at 30–50 (ATVL…GSLV), 67–87 (LVIA…QTFF), and 107–127 (IIVL…LIVV).

This sequence belongs to the FrdC family. As to quaternary structure, part of an enzyme complex containing four subunits: a flavoprotein (FrdA), an iron-sulfur protein (FrdB), and two hydrophobic anchor proteins (FrdC and FrdD).

It is found in the cell inner membrane. Functionally, anchors the catalytic components of the fumarate reductase complex to the cell membrane, binds quinones. In Vibrio cholerae serotype O1 (strain ATCC 39541 / Classical Ogawa 395 / O395), this protein is Fumarate reductase subunit C.